Reading from the N-terminus, the 163-residue chain is Probable RNA-binding protein EIF1AD (163 aa).

In terms of domain architecture, S1-like spans methionine 18–threonine 96. A disordered region spans residues alanine 106–aspartate 163. Composition is skewed to acidic residues over residues aspartate 126–leucine 136 and glutamate 146–aspartate 163.

Belongs to the EIF1AD family.

This is Probable RNA-binding protein EIF1AD from Drosophila pseudoobscura pseudoobscura (Fruit fly).